A 739-amino-acid chain; its full sequence is Long-chain-fatty-acid--CoA ligase ACSBG2 (739 aa).

ATP is bound by residues 287 to 295 (TSGTTGQPK), 478 to 483 (ELYGMS), Asp556, Arg571, and Lys684.

This sequence belongs to the ATP-dependent AMP-binding enzyme family. Bubblegum subfamily.

The protein resides in the cytoplasm. It catalyses the reaction a long-chain fatty acid + ATP + CoA = a long-chain fatty acyl-CoA + AMP + diphosphate. The enzyme catalyses (5Z,8Z,11Z,14Z)-eicosatetraenoate + ATP + CoA = (5Z,8Z,11Z,14Z)-eicosatetraenoyl-CoA + AMP + diphosphate. The catalysed reaction is hexadecanoate + ATP + CoA = hexadecanoyl-CoA + AMP + diphosphate. It carries out the reaction (9Z)-octadecenoate + ATP + CoA = (9Z)-octadecenoyl-CoA + AMP + diphosphate. It catalyses the reaction (9Z,12Z)-octadecadienoate + ATP + CoA = (9Z,12Z)-octadecadienoyl-CoA + AMP + diphosphate. The enzyme catalyses tetracosanoate + ATP + CoA = tetracosanoyl-CoA + AMP + diphosphate. Catalyzes the conversion of fatty acids such as long chain and very long-chain fatty acids to their active form acyl-CoAs for both synthesis of cellular lipids, and degradation via beta-oxidation. Can activate diverse saturated, monosaturated and polyunsaturated fatty acids. This chain is Long-chain-fatty-acid--CoA ligase ACSBG2, found in Xenopus laevis (African clawed frog).